A 644-amino-acid chain; its full sequence is Sodium/hydrogen exchanger 9 (644 aa).

At 1-20 (MAGQLRFTSGKDEDHFQHQG) the chain is on the lumenal side. A helical transmembrane segment spans residues 21–41 (AVELLAFNFLLILTILTIWLF). At 42–45 (KNHR) the chain is on the cytoplasmic side. The chain crosses the membrane as a helical span at residues 46 to 66 (FRFLHETGGAMVYGLIMGLIL). Topologically, residues 67 to 126 (RYATAPTDIDSGTVYNCGNLFFSPSTLLVNITDQVYEYKYQREINQHNISPHQGNAILEK) are lumenal. The chain crosses the membrane as a helical span at residues 127–147 (MTFDPEIFFNVLLPPIIFHAG). Topologically, residues 148-164 (YSLKKRHFFQNLGSILT) are cytoplasmic. A helical membrane pass occupies residues 165–185 (YAFLGTAISCVVIGLIMYGFV). At 186–203 (KAMVHAGQLKSGDFHFTD) the chain is on the lumenal side. The chain crosses the membrane as a helical span at residues 204-224 (CLFFGSLMSATDPVTVLAIFH). The Cytoplasmic segment spans residues 225–235 (ELHVDPDLYTL). The chain crosses the membrane as a helical span at residues 236 to 256 (LFGESVLNDAVAIVLTYSISI). The Lumenal segment spans residues 257 to 277 (YSPKENPNAFDTAAFFQSVGN). Residues 278 to 298 (FLGIFAGSFAMGSAYAVVTAL) traverse the membrane as a helical segment. Residues 299-309 (LTKFTKLREFP) lie on the Cytoplasmic side of the membrane. A helical membrane pass occupies residues 310-327 (MLETGLFFLLSWSAFLSA). Residues 328–333 (EAAGLT) lie on the Lumenal side of the membrane. The chain crosses the membrane as a helical span at residues 334–350 (GIVAVLFCGVTQAHYTY). Residues 351–364 (NNLSSDSKLRTKQL) lie on the Cytoplasmic side of the membrane. The helical transmembrane segment at 365–385 (FEFMNFLAENVIFCYMGLALF) threads the bilayer. Position 386 (Thr-386) is a topological domain, lumenal. Residues 387-407 (FQNHIFNALFILGAFLAIFVA) form a helical membrane-spanning segment. Topologically, residues 408–429 (RACNIYPLSFLLNLGRKQKIPW) are cytoplasmic. Residues 430-450 (NFQHMMMFSGLRGAIAFALAI) form a helical membrane-spanning segment. Topologically, residues 451–465 (RNTESQPKQMMFTTT) are lumenal. Residues 466–486 (LLLVFFTVWVFGGGTTPMLTW) traverse the membrane as a helical segment. Over 487–644 (LQIRVGVDLD…EQTRGQPQMD (158 aa)) the chain is Cytoplasmic. The segment at 590-644 (YQEQSPSPSSPTTKLALDQKSSGQTPGKENIYEGDLGLGGYDLKLEQTRGQPQMD) is disordered.

The protein belongs to the monovalent cation:proton antiporter 1 (CPA1) transporter (TC 2.A.36) family. As to quaternary structure, homodimer; phosphatidylinositol-4,5-bisphosphate (PIP2) and phosphatidylinositol 3,4,5-trisphosphate (PIP3) could be involved in the dimer stabilization. Interacts (via the C-terminus) with RACK1. Interacts with CHP1. As to expression, expressed in the brain. Highly expressed in immune cells, specifically macrophages.

It localises to the late endosome membrane. The protein localises to the cell membrane. The protein resides in the early endosome membrane. Its subcellular location is the recycling endosome membrane. It is found in the cytoplasmic vesicle. It localises to the phagosome membrane. The catalysed reaction is Na(+)(in) + H(+)(out) = Na(+)(out) + H(+)(in). It catalyses the reaction K(+)(in) + H(+)(out) = K(+)(out) + H(+)(in). Its function is as follows. Endosomal Na(+), K(+)/H(+) antiporter. Mediates the electroneutral exchange of endosomal luminal H(+) for a cytosolic Na(+) or K(+). By facilitating proton efflux, SLC9A9 counteracts the acidity generated by vacuolar (V)-ATPase, thereby limiting luminal acidification. Regulates organellar pH and consequently, endosome maturation and endocytic trafficking of plasma membrane receptors and neurotransporters. Promotes the recycling of transferrin receptors back to the cell surface to facilitate additional iron uptake in the brain. Regulates synaptic transmission by regulating the luminal pH of axonal endosomes. Regulates phagosome lumenal pH, thus affecting phagosome maturation, and consequently, microbicidal activity in macrophages. Can also be active at the cell surface of specialized cells, e.g., in the inner ear hair bundles uses the high K(+) of the endolymph to regulate intracelular pH. The chain is Sodium/hydrogen exchanger 9 (Slc9a9) from Mus musculus (Mouse).